Consider the following 446-residue polypeptide: Hercynine oxygenase (446 aa).

His-51 is a Fe cation binding site. 87–90 lines the gamma-L-glutamyl-L-cysteine pocket; that stretch reads RASR. Positions 134 and 138 each coordinate Fe cation. Residues Asp-416 and Arg-420 each contribute to the gamma-L-glutamyl-L-cysteine site.

The protein belongs to the EgtB family. Monomer. Fe(2+) serves as cofactor.

It carries out the reaction gamma-L-glutamyl-L-cysteine + hercynine + O2 = gamma-L-glutamyl-hercynylcysteine S-oxide + H2O. It functions in the pathway amino-acid biosynthesis; ergothioneine biosynthesis. Its function is as follows. Catalyzes the oxidative sulfurization of hercynine (N-alpha,N-alpha,N-alpha-trimethyl-L-histidine) into hercynyl-gamma-L-glutamyl-L-cysteine sulfoxide, a step in the biosynthesis pathway of ergothioneine. This Mycolicibacterium thermoresistibile (strain ATCC 19527 / DSM 44167 / CIP 105390 / JCM 6362 / NCTC 10409 / 316) (Mycobacterium thermoresistibile) protein is Hercynine oxygenase.